The primary structure comprises 348 residues: Nicotinate-nucleotide--dimethylbenzimidazole phosphoribosyltransferase (348 aa).

Residue glutamate 317 is the Proton acceptor of the active site.

The protein belongs to the CobT family.

The enzyme catalyses 5,6-dimethylbenzimidazole + nicotinate beta-D-ribonucleotide = alpha-ribazole 5'-phosphate + nicotinate + H(+). It participates in nucleoside biosynthesis; alpha-ribazole biosynthesis; alpha-ribazole from 5,6-dimethylbenzimidazole: step 1/2. Catalyzes the synthesis of alpha-ribazole-5'-phosphate from nicotinate mononucleotide (NAMN) and 5,6-dimethylbenzimidazole (DMB). The protein is Nicotinate-nucleotide--dimethylbenzimidazole phosphoribosyltransferase of Clostridioides difficile (strain 630) (Peptoclostridium difficile).